The following is a 388-amino-acid chain: 3-dehydroquinate synthase (388 aa).

It belongs to the archaeal-type DHQ synthase family.

It catalyses the reaction 2-amino-2,3,7-trideoxy-D-lyxo-hept-6-ulosonate + NAD(+) + H2O = 3-dehydroquinate + NH4(+) + NADH + H(+). Functionally, catalyzes the oxidative deamination and cyclization of 2-amino-3,7-dideoxy-D-threo-hept-6-ulosonic acid (ADH) to yield 3-dehydroquinate (DHQ), which is fed into the canonical shikimic pathway of aromatic amino acid biosynthesis. The chain is 3-dehydroquinate synthase from Haloarcula marismortui (strain ATCC 43049 / DSM 3752 / JCM 8966 / VKM B-1809) (Halobacterium marismortui).